The chain runs to 343 residues: Protein RecA (343 aa).

ATP is bound at residue glycine 65 to threonine 72.

The protein belongs to the RecA family.

It is found in the cytoplasm. Its function is as follows. Can catalyze the hydrolysis of ATP in the presence of single-stranded DNA, the ATP-dependent uptake of single-stranded DNA by duplex DNA, and the ATP-dependent hybridization of homologous single-stranded DNAs. It interacts with LexA causing its activation and leading to its autocatalytic cleavage. The sequence is that of Protein RecA from Campylobacter jejuni subsp. jejuni serotype O:6 (strain 81116 / NCTC 11828).